The sequence spans 689 residues: Protein asunder (689 aa).

Positions 521 to 550 (NGARLKLSKAKDQYRLLYRELEQLIQLNAT) form a coiled coil. Disordered regions lie at residues 591-619 (SPERLEPISSVGASGSSNSNSLLKASKRR) and 665-689 (GTKDKDAVTTGASITPNVKEESVRS). Over residues 599–614 (SSVGASGSSNSNSLLK) the composition is skewed to low complexity. Positions 613–619 (LKASKRR) match the Nuclear localization signal (NLS) motif.

Belongs to the Integrator subunit 13 family. In terms of assembly, belongs to the multiprotein complex Integrator, at least composed of IntS1, IntS2, IntS3, IntS4, omd/IntS5, IntS6, defl/IntS7, IntS8, IntS9, IntS10, IntS11, IntS12, asun/IntS13, IntS14 and IntS15. The core complex associates with protein phosphatase 2A subunits mts/PP2A and Pp2A-29B, to form the Integrator-PP2A (INTAC) complex. Phosphorylated.

Its subcellular location is the nucleus. It is found in the cytoplasm. The protein localises to the perinuclear region. Its function is as follows. Component of the integrator complex, a multiprotein complex that terminates RNA polymerase II (Pol II) transcription in the promoter-proximal region of genes. The integrator complex provides a quality checkpoint during transcription elongation by driving premature transcription termination of transcripts that are unfavorably configured for transcriptional elongation: the complex terminates transcription by (1) catalyzing dephosphorylation of the C-terminal domain (CTD) of Pol II subunit Polr2A/Rbp1 and Spt5, and (2) degrading the exiting nascent RNA transcript via endonuclease activity. The integrator complex is also involved in the 3'-end processing of the U7 snRNA, and also the spliceosomal snRNAs U1, U2, U4 and U5. The sequence is that of Protein asunder (asun) from Drosophila sechellia (Fruit fly).